The following is a 334-amino-acid chain: ADP-L-glycero-D-manno-heptose-6-epimerase (334 aa).

NADP(+) is bound by residues 11 to 12, 32 to 33, K39, K54, 77 to 81, and N94; these read FI, DN, and QGACS. Y141 acts as the Proton acceptor in catalysis. NADP(+) is bound at residue K145. Residue N171 participates in substrate binding. NADP(+)-binding residues include V172 and K180. K180 acts as the Proton acceptor in catalysis. Residues R182, H189, 203-206, R216, and Y295 contribute to the substrate site; that span reads FGSN.

Belongs to the NAD(P)-dependent epimerase/dehydratase family. HldD subfamily. Homopentamer. Requires NADP(+) as cofactor.

The enzyme catalyses ADP-D-glycero-beta-D-manno-heptose = ADP-L-glycero-beta-D-manno-heptose. The protein operates within nucleotide-sugar biosynthesis; ADP-L-glycero-beta-D-manno-heptose biosynthesis; ADP-L-glycero-beta-D-manno-heptose from D-glycero-beta-D-manno-heptose 7-phosphate: step 4/4. It participates in bacterial outer membrane biogenesis; LOS core biosynthesis. In terms of biological role, catalyzes the interconversion between ADP-D-glycero-beta-D-manno-heptose and ADP-L-glycero-beta-D-manno-heptose via an epimerization at carbon 6 of the heptose. The protein is ADP-L-glycero-D-manno-heptose-6-epimerase of Neisseria gonorrhoeae.